The following is a 554-amino-acid chain: Valerianol synthase TPS1G (554 aa).

Residues aspartate 307 and aspartate 311 each contribute to the Mg(2+) site. The DDXXD motif motif lies at 326-330 (VQRWD). 3 residues coordinate Mg(2+): aspartate 452, serine 456, and glutamate 460.

The protein belongs to the terpene synthase family. The cofactor is Mg(2+).

The enzyme catalyses (2E,6E)-farnesyl diphosphate + H2O = valerianol + diphosphate. Its pathway is secondary metabolite biosynthesis; terpenoid biosynthesis. Functionally, terpene synthase that catalyzes the biosynthesis of the terpene valerianol, which is a volatile compound of floral scent. This is Valerianol synthase TPS1G from Camellia hiemalis (Camellia).